Here is an 81-residue protein sequence, read N- to C-terminus: Large ribosomal subunit protein uL23 (81 aa).

The protein belongs to the universal ribosomal protein uL23 family. Part of the 50S ribosomal subunit. Contacts protein L29.

Functionally, binds to 23S rRNA. One of the proteins that surrounds the polypeptide exit tunnel on the outside of the ribosome. In Pyrobaculum aerophilum (strain ATCC 51768 / DSM 7523 / JCM 9630 / CIP 104966 / NBRC 100827 / IM2), this protein is Large ribosomal subunit protein uL23.